The primary structure comprises 751 residues: Zinc finger protein 337 (751 aa).

Residues 12-83 enclose the KRAB domain; it reads LAFGDVTVDF…ERRRRPGPCA (72 aa). A compositionally biased stretch (low complexity) spans 101–116; it reads QRQQQLQFSDQSFQSD. Residues 101–163 form a disordered region; sequence QRQQQLQFSD…SSQGQRENPT (63 aa). The C2H2-type 1; degenerate zinc-finger motif lies at 180–202; it reads FKCAERGQDFSRKMMVIIHKKAH. 9 consecutive C2H2-type zinc fingers follow at residues 208 to 230, 236 to 258, 264 to 286, 292 to 314, 320 to 342, 348 to 370, 376 to 398, 404 to 426, and 432 to 454; these read FTCR…QNTH, YVCS…QRTH, FLCK…ERTH, YECQ…LKAH, FVCK…KRIH, YRCQ…QRTH, FACR…QRTH, FVCK…QRTH, and FVCR…QITH. Lys-458 is covalently cross-linked (Glycyl lysine isopeptide (Lys-Gly) (interchain with G-Cter in SUMO2)). 10 consecutive C2H2-type zinc fingers follow at residues 460–482, 488–510, 516–538, 544–566, 572–594, 600–622, 628–650, 656–679, 685–707, and 713–735; these read FVCK…QRTH, YGCR…LRAH, FFCR…QRTH, FMCK…QWTH, FNCK…QKTH, FICS…QLAH, FVCN…WRIH, FVCQ…ERIH, and YECQ…LKRH.

It belongs to the krueppel C2H2-type zinc-finger protein family.

The protein resides in the nucleus. May be involved in transcriptional regulation. The polypeptide is Zinc finger protein 337 (ZNF337) (Homo sapiens (Human)).